Reading from the N-terminus, the 553-residue chain is Thermosome subunit beta (553 aa).

The interval Lys534 to Asp553 is disordered.

It belongs to the TCP-1 chaperonin family. As to quaternary structure, forms a Heterooligomeric complex of two stacked eight-membered rings.

Functionally, molecular chaperone; binds unfolded polypeptides in vitro, and has a weak ATPase activity. The chain is Thermosome subunit beta (thsB) from Sulfolobus acidocaldarius (strain ATCC 33909 / DSM 639 / JCM 8929 / NBRC 15157 / NCIMB 11770).